A 98-amino-acid chain; its full sequence is Cell division protein FtsB (98 aa).

The Cytoplasmic portion of the chain corresponds to 1 to 3 (MKR). A helical transmembrane segment spans residues 4–21 (LLIVLIALLAMLEYRLWF). Residues 22-98 (GDKSLAESFH…GGERDKPSND (77 aa)) lie on the Periplasmic side of the membrane. The stretch at 31–74 (HLQEQIKLQQQSNAQLVARNQILREEISDLRSGTEALEERARNE) forms a coiled coil.

The protein belongs to the FtsB family. As to quaternary structure, part of a complex composed of FtsB, FtsL and FtsQ.

The protein localises to the cell inner membrane. Essential cell division protein. May link together the upstream cell division proteins, which are predominantly cytoplasmic, with the downstream cell division proteins, which are predominantly periplasmic. The protein is Cell division protein FtsB of Shewanella halifaxensis (strain HAW-EB4).